The sequence spans 103 residues: Small ribosomal subunit protein uS10 (103 aa).

Belongs to the universal ribosomal protein uS10 family. In terms of assembly, part of the 30S ribosomal subunit.

In terms of biological role, involved in the binding of tRNA to the ribosomes. In Chromohalobacter salexigens (strain ATCC BAA-138 / DSM 3043 / CIP 106854 / NCIMB 13768 / 1H11), this protein is Small ribosomal subunit protein uS10.